Here is a 165-residue protein sequence, read N- to C-terminus: SPbeta prophage-derived uncharacterized protein YorR (165 aa).

This Bacillus subtilis (strain 168) protein is SPbeta prophage-derived uncharacterized protein YorR (yorR).